The primary structure comprises 355 residues: 1D-myo-inositol 2-acetamido-2-deoxy-alpha-D-glucopyranoside deacetylase 3 (355 aa).

Residues H31, D34, and H169 each contribute to the Zn(2+) site.

Belongs to the MshB deacetylase family. Requires Zn(2+) as cofactor.

It catalyses the reaction 1D-myo-inositol 2-acetamido-2-deoxy-alpha-D-glucopyranoside + H2O = 1D-myo-inositol 2-amino-2-deoxy-alpha-D-glucopyranoside + acetate. Functionally, catalyzes the deacetylation of 1D-myo-inositol 2-acetamido-2-deoxy-alpha-D-glucopyranoside (GlcNAc-Ins) in the mycothiol biosynthesis pathway. The protein is 1D-myo-inositol 2-acetamido-2-deoxy-alpha-D-glucopyranoside deacetylase 3 of Catenulispora acidiphila (strain DSM 44928 / JCM 14897 / NBRC 102108 / NRRL B-24433 / ID139908).